A 221-amino-acid chain; its full sequence is Translation initiation factor 6 (221 aa).

This sequence belongs to the eIF-6 family.

Binds to the 50S ribosomal subunit and prevents its association with the 30S ribosomal subunit to form the 70S initiation complex. This Methanocella arvoryzae (strain DSM 22066 / NBRC 105507 / MRE50) protein is Translation initiation factor 6.